A 379-amino-acid polypeptide reads, in one-letter code: 1-deoxy-D-xylulose 5-phosphate reductoisomerase (379 aa).

NADPH is bound by residues Thr-10, Gly-11, Ser-12, Ile-13, Arg-38, Asn-39, and Asn-121. Residue Lys-122 participates in 1-deoxy-D-xylulose 5-phosphate binding. Glu-123 serves as a coordination point for NADPH. Position 147 (Asp-147) interacts with Mn(2+). Residues Ser-148, Glu-149, Ser-173, and His-196 each contribute to the 1-deoxy-D-xylulose 5-phosphate site. Residue Glu-149 participates in Mn(2+) binding. Residue Gly-202 coordinates NADPH. Residues Ser-209, Asn-214, Lys-215, and Glu-218 each coordinate 1-deoxy-D-xylulose 5-phosphate. Glu-218 lines the Mn(2+) pocket.

The protein belongs to the DXR family. It depends on Mg(2+) as a cofactor. Mn(2+) serves as cofactor.

It carries out the reaction 2-C-methyl-D-erythritol 4-phosphate + NADP(+) = 1-deoxy-D-xylulose 5-phosphate + NADPH + H(+). It functions in the pathway isoprenoid biosynthesis; isopentenyl diphosphate biosynthesis via DXP pathway; isopentenyl diphosphate from 1-deoxy-D-xylulose 5-phosphate: step 1/6. Functionally, catalyzes the NADPH-dependent rearrangement and reduction of 1-deoxy-D-xylulose-5-phosphate (DXP) to 2-C-methyl-D-erythritol 4-phosphate (MEP). The protein is 1-deoxy-D-xylulose 5-phosphate reductoisomerase of Chlamydia muridarum (strain MoPn / Nigg).